We begin with the raw amino-acid sequence, 585 residues long: A-type ATP synthase subunit A (585 aa).

Residue 232–239 participates in ATP binding; it reads GPFGSGKT.

This sequence belongs to the ATPase alpha/beta chains family. In terms of assembly, has multiple subunits with at least A(3), B(3), C, D, E, F, H, I and proteolipid K(x).

It localises to the cell membrane. It catalyses the reaction ATP + H2O + 4 H(+)(in) = ADP + phosphate + 5 H(+)(out). Its function is as follows. Component of the A-type ATP synthase that produces ATP from ADP in the presence of a proton gradient across the membrane. The A chain is the catalytic subunit. This is A-type ATP synthase subunit A from Methanosphaera stadtmanae (strain ATCC 43021 / DSM 3091 / JCM 11832 / MCB-3).